An 802-amino-acid polypeptide reads, in one-letter code: Ent-copalyl diphosphate synthase, chloroplastic (802 aa).

Residues methionine 1–asparagine 60 constitute a chloroplast transit peptide. Lysine 245 is a substrate binding site. Positions 377 and 379 each coordinate Mg(2+). The DXDD motif signature appears at aspartate 377–aspartate 380. Lysine 463 provides a ligand contact to substrate.

This sequence belongs to the terpene synthase family. Tpsc subfamily. Mg(2+) is required as a cofactor. In terms of processing, the N-terminus is blocked. Expressed in roots, leaves, flowers and also in siliques.

Its subcellular location is the plastid. It localises to the chloroplast. The enzyme catalyses (2E,6E,10E)-geranylgeranyl diphosphate = ent-copalyl diphosphate. It functions in the pathway plant hormone biosynthesis; gibberellin biosynthesis. Its activity is regulated as follows. Inhibited by high concentrations of magnesium. Functionally, catalyzes the conversion of geranylgeranyl diphosphate to the gibberellin precursor ent-copalyl diphosphate. The chain is Ent-copalyl diphosphate synthase, chloroplastic (GA1) from Arabidopsis thaliana (Mouse-ear cress).